A 335-amino-acid polypeptide reads, in one-letter code: Ornithine carbamoyltransferase 2, catabolic (335 aa).

Carbamoyl phosphate-binding positions include 62-65 (STRT), Gln-89, Arg-113, and 140-143 (HPTQ). L-ornithine-binding positions include Asn-172, Asp-236, and 240–241 (SM). Carbamoyl phosphate is bound by residues 277-278 (CL) and Arg-322.

This sequence belongs to the aspartate/ornithine carbamoyltransferase superfamily. OTCase family.

It is found in the cytoplasm. The enzyme catalyses carbamoyl phosphate + L-ornithine = L-citrulline + phosphate + H(+). It functions in the pathway amino-acid degradation; L-arginine degradation via ADI pathway; carbamoyl phosphate from L-arginine: step 2/2. Its function is as follows. Reversibly catalyzes the transfer of the carbamoyl group from carbamoyl phosphate (CP) to the N(epsilon) atom of ornithine (ORN) to produce L-citrulline. The sequence is that of Ornithine carbamoyltransferase 2, catabolic (arcB2) from Staphylococcus epidermidis (strain ATCC 12228 / FDA PCI 1200).